Here is a 279-residue protein sequence, read N- to C-terminus: Sulfur carrier protein FdhD (279 aa).

Residue Cys112 is the Cysteine persulfide intermediate of the active site.

Belongs to the FdhD family.

It localises to the cytoplasm. Required for formate dehydrogenase (FDH) activity. Acts as a sulfur carrier protein that transfers sulfur from IscS to the molybdenum cofactor prior to its insertion into FDH. The polypeptide is Sulfur carrier protein FdhD (Nocardia farcinica (strain IFM 10152)).